The following is a 264-amino-acid chain: MGQTALARGSSSTPSSHALYSDLSPPEGLEELLSAPPPDLGAQRHHGWNPKDCSENIDVKEGGLCFERRPVAQSTDGVRGKRGYSRGLHAWEISWPLEQRGTHAVVGVATALAPLQADHYAALLGSNSESWGWDIGRGKLYHQSKGLEAPQYPAGPQGEQLVVPERLLVVLDMEEGTLGYSIGGTYLGPAFRGLKGRTLYPSVSAVWGQCQVRIRYLGERRAEEPQSLLHLSRLCVRHALGDTRLGQISSLPLPPAMKRYLLYK.

A compositionally biased stretch (polar residues) spans 1-18; that stretch reads MGQTALARGSSSTPSSHA. The tract at residues 1 to 53 is disordered; the sequence is MGQTALARGSSSTPSSHALYSDLSPPEGLEELLSAPPPDLGAQRHHGWNPKDC. Positions 21-34 are enriched in low complexity; that stretch reads SDLSPPEGLEELLS. In terms of domain architecture, B30.2/SPRY spans 26 to 221; sequence PEGLEELLSA…VRIRYLGERR (196 aa). In terms of domain architecture, SOCS box spans 222-264; sequence AEEPQSLLHLSRLCVRHALGDTRLGQISSLPLPPAMKRYLLYK.

This sequence belongs to the SPSB family. As to quaternary structure, component of the probable ECS(SPSB2) E3 ubiquitin-protein ligase complex which contains CUL5, RNF7/RBX2, Elongin BC complex and SPSB2. Interacts with CUL5, RNF7, ELOB and ELOC. Interacts with MET. Interacts (via B30.2/SPRY domain) with PAWR; this interaction occurs in association with the Elongin BC complex. Interacts with NOS2.

The protein resides in the cytoplasm. Its subcellular location is the cytosol. It functions in the pathway protein modification; protein ubiquitination. In terms of biological role, substrate recognition component of a SCF-like ECS (Elongin BC-CUL2/5-SOCS-box protein) E3 ubiquitin-protein ligase complex which mediates the ubiquitination and subsequent proteasomal degradation of target proteins. Negatively regulates nitric oxide (NO) production and limits cellular toxicity in activated macrophages by mediating the ubiquitination and proteasomal degradation of NOS2. Acts as a bridge which links NOS2 with the ECS E3 ubiquitin ligase complex components ELOC and CUL5. This Rattus norvegicus (Rat) protein is SPRY domain-containing SOCS box protein 2 (Spsb2).